The primary structure comprises 217 residues: Vesicle transport through interaction with t-SNAREs homolog 1A (217 aa).

The Cytoplasmic portion of the chain corresponds to M1–R192. Coiled coils occupy residues P31–R92 and E112–S178. The helical transmembrane segment at I193–S213 threads the bilayer. The Extracellular segment spans residues V214 to H217.

Belongs to the VTI1 family. In terms of assembly, interacts with distinct SNARE complexes that contain either STX5 or STX6. Interacts with NAPA and, to a lesser extent, with NAPG. Identified in a complex containing STX6, STX12, VAMP4 and VTI1A.

The protein resides in the cytoplasmic vesicle. The protein localises to the golgi apparatus membrane. V-SNARE that mediates vesicle transport pathways through interactions with t-SNAREs on the target membrane. These interactions are proposed to mediate aspects of the specificity of vesicle trafficking and to promote fusion of the lipid bilayers. Involved in vesicular transport from the late endosomes to the trans-Golgi network. Along with VAMP7, involved in an non-conventional RAB1-dependent traffic route to the cell surface used by KCNIP1 and KCND2. May be involved in increased cytokine secretion associated with cellular senescence. The chain is Vesicle transport through interaction with t-SNAREs homolog 1A (VTI1A) from Homo sapiens (Human).